The sequence spans 300 residues: Neutral protease NprE (300 aa).

Residue aspartate 139 coordinates Ca(2+). Histidine 143 provides a ligand contact to Zn(2+). Residue glutamate 144 is part of the active site. Residues histidine 147 and glutamate 167 each coordinate Zn(2+). Residues aspartate 178, aspartate 181, aspartate 183, and glutamate 186 each contribute to the Ca(2+) site. Histidine 228 functions as the Proton donor in the catalytic mechanism.

The protein belongs to the peptidase M4 family. The cofactor is Ca(2+). Zn(2+) is required as a cofactor.

It localises to the secreted. It carries out the reaction Similar, but not identical, to that of thermolysin.. Its function is as follows. Extracellular zinc metalloprotease. In Bacillus pumilus (Bacillus mesentericus), this protein is Neutral protease NprE (nprE).